An 89-amino-acid chain; its full sequence is DNA-directed RNA polymerase subunit omega (89 aa).

The protein belongs to the RNA polymerase subunit omega family. As to quaternary structure, the RNAP catalytic core consists of 2 alpha, 1 beta, 1 beta' and 1 omega subunit. When a sigma factor is associated with the core the holoenzyme is formed, which can initiate transcription.

It carries out the reaction RNA(n) + a ribonucleoside 5'-triphosphate = RNA(n+1) + diphosphate. Promotes RNA polymerase assembly. Latches the N- and C-terminal regions of the beta' subunit thereby facilitating its interaction with the beta and alpha subunits. This is DNA-directed RNA polymerase subunit omega from Clavibacter michiganensis subsp. michiganensis (strain NCPPB 382).